A 491-amino-acid chain; its full sequence is MAQSGGEARPGPKTAVQIRVAIQEAEDVDELEDEEEGAETRGAGDPARYLSPGWGSASEEEPSRGHSGTTASGGENEREDLEQEWKPPDEELIKKLVDQIEFYFSDENLEKDAFLLKHVRRNKLGYVSVKLLTSFKKVKHLTRDWRTTAHALKYSVVLELNEDHRKVRRTTPVPLFPNENLPSKMLLVYDLYLSPKLWALATPQKNGRVQEKVMEHLLKLFGTFGVISSVRILKPGRELPPDIRRISSRYSQVGTQECAIVEFEEVEAAIKAHEFMITESQGKENMKAVLIGMKPPKKKPAKDKNHDEEPTASIHLNKSLNKRVEELQYMGDESSANSSSDPESNPTSPMAGRRHAATNKLSPSGHQNLFLSPNASPCTSPWSSPLAQRKGVSRKSPLAEEGRLNCSTSPEIFRKCMDYSSDSSVTPSGSPWVRRRRQAEMGTQEKSPGTSPLLSRKMQTADGLPVGVLRLPRGPDNTRGFHGHERSRACV.

Residues M1–P87 are disordered. A2 bears the N-acetylalanine mark. Residues E24–G37 show a composition bias toward acidic residues. Phosphoserine occurs at positions 56 and 58. The HTH La-type RNA-binding domain maps to K86 to P177. Residues K184–P296 form the RRM domain. A Nuclear export signal motif is present at residues L186–L193. Disordered regions lie at residues M293–R403 and S423–V491. The Nuclear localization signal motif lies at P296–K302. Residues D332–P346 show a composition bias toward low complexity. Polar residues-rich tracts occupy residues N359–L386 and Q444–L453. The 59-residue stretch at P427 to E485 folds into the SUZ-C domain. Residues H482 to V491 are compositionally biased toward basic and acidic residues.

As to quaternary structure, interacts (via the HTH domain) with VIM/vimentin. Interacts (via C-terminus) with non-muscle myosin MYH10. Interacts (via C-terminus) with DHX9. As to expression, expressed in numerous tissues.

It is found in the cytoplasm. Its subcellular location is the nucleus. Regulates the coordinated translation of type I collagen alpha-1 and alpha-2 mRNAs, CO1A1 and CO1A2. Stabilizes mRNAs through high-affinity binding of a stem-loop structure in their 5' UTR. This regulation requires VIM and MYH10 filaments, and the helicase DHX9. The sequence is that of La-related protein 6 (LARP6) from Homo sapiens (Human).